The sequence spans 227 residues: 7-cyano-7-deazaguanine synthase (227 aa).

Residue 7–17 (LSGGMDSLVTT) participates in ATP binding. Residues Cys187, Cys195, Cys198, and Cys201 each contribute to the Zn(2+) site.

Belongs to the QueC family. Requires Zn(2+) as cofactor.

It carries out the reaction 7-carboxy-7-deazaguanine + NH4(+) + ATP = 7-cyano-7-deazaguanine + ADP + phosphate + H2O + H(+). It participates in purine metabolism; 7-cyano-7-deazaguanine biosynthesis. Its function is as follows. Catalyzes the ATP-dependent conversion of 7-carboxy-7-deazaguanine (CDG) to 7-cyano-7-deazaguanine (preQ(0)). The chain is 7-cyano-7-deazaguanine synthase from Chlorobium luteolum (strain DSM 273 / BCRC 81028 / 2530) (Pelodictyon luteolum).